The primary structure comprises 379 residues: Carboxypeptidase Y-deficient protein 8 (379 aa).

Low complexity predominate over residues His84–Val107. The tract at residues His84–Asp108 is disordered. A Phosphoserine modification is found at Ser216.

It belongs to the VPS26 family. As to quaternary structure, component of the retromer complex which consists of VPS29, VPS26, VPS35, VPS5 and VPS17. Component of a retromer subcomplex consisting of VPS29, VPS26 and VPS35.

Functionally, plays a role in vesicular protein sorting. Required for the endosome-to-Golgi retrieval of the vacuolar protein sorting receptor VPS10. Component of the membrane-associated retromer complex which is essential in endosome-to-Golgi retrograde transport. The VPS29-VPS26-VPS35 subcomplex may be involved in cargo selection. The chain is Carboxypeptidase Y-deficient protein 8 (PEP8) from Saccharomyces cerevisiae (strain ATCC 204508 / S288c) (Baker's yeast).